We begin with the raw amino-acid sequence, 4059 residues long: Fibrocystin (4059 aa).

Positions 1–18 (MMLAWLVSLLSMEVLLLA) are cleaved as a signal peptide. The Extracellular segment spans residues 19–3851 (KPYSSFQFEP…LPVASKERST (3833 aa)). The IPT/TIG 1; atypical domain maps to 25–109 (QFEPAEGSLA…AGPYSLEMRS (85 aa)). Asparagine 55 and asparagine 224 each carry an N-linked (GlcNAc...) asparagine glycan. 2 consecutive IPT/TIG domains span residues 135–230 (PVLY…FSVF) and 257–333 (PEIL…FEVG). The PA14 domain maps to 323–483 (AGNRGLRFEV…TWLNPDVVNT (161 aa)). Asparagine 355, asparagine 385, asparagine 518, asparagine 527, asparagine 620, asparagine 639, asparagine 709, asparagine 867, asparagine 965, asparagine 975, asparagine 1082, asparagine 1114, asparagine 1133, asparagine 1239, asparagine 1273, asparagine 1308, asparagine 1319, asparagine 1344, asparagine 1373, asparagine 1456, asparagine 1471, asparagine 1528, asparagine 1613, asparagine 1627, asparagine 1694, asparagine 1760, asparagine 1775, asparagine 1875, asparagine 1879, asparagine 1915, asparagine 1955, asparagine 2030, and asparagine 2139 each carry an N-linked (GlcNAc...) asparagine glycan. 2 consecutive IPT/TIG domains span residues 945–997 (LVHF…FMLV) and 1017–1100 (PRLD…AFTY). The IPT/TIG 6; atypical domain occupies 1106 to 1190 (PVIVSLSRNR…IRSQGVDLYI (85 aa)). The IPT/TIG 7 domain maps to 1198–1266 (SVEPCSGSLL…RADVLTVLAS (69 aa)). An IPT/TIG 8; atypical domain is found at 1297–1378 (PVVTAMWGEF…MGFANMSVVP (82 aa)). Positions 1385 to 1466 (PQIIAIFPTH…ITVLVNGLTS (82 aa)) constitute an IPT/TIG 9 domain. 2 consecutive IPT/TIG domains span residues 1482-1566 (PIVD…RNFF) and 1569-1637 (PQVL…IDVN). Positions 1654–1738 (PELLSVSRSQ…VLRATVTSVT (85 aa)) constitute an IPT/TIG 12; atypical domain. Residues 1928–2049 (HSWFPQRVPH…PEVTVTYLQA (122 aa)) form the G8 1 domain. 2 PbH1 repeats span residues 2244–2266 (TWGLKVDSNVFYKIVGHALLLGS) and 2287–2321 (EQGSTIRNNVIISVSAAEGLSGSEMLAPAGIYTFS). N-linked (GlcNAc...) asparagine glycosylation is present at asparagine 2380. 2 PbH1 repeats span residues 2404 to 2426 (SNNLHLKNFQVYACRDFGIDILE) and 2459 to 2481 (RWELTISNTTFVNFDGNCVAIRT). N-linked (GlcNAc...) asparagine glycosylation is found at asparagine 2466, asparagine 2503, asparagine 2529, asparagine 2547, asparagine 2581, asparagine 2589, asparagine 2627, asparagine 2747, and asparagine 2762. The G8 2 domain occupies 2741-2867 (KGWGGYNHTI…PKKSWVHLGA (127 aa)). PbH1 repeat units follow at residues 3004–3026 (SAGSWVISSTVHQSCSVGIHASS) and 3027–3049 (SHGVILTDNVVFGTNGHGIDVEG). A glycan (N-linked (GlcNAc...) asparagine) is linked at asparagine 3051. The PbH1 7 repeat unit spans residues 3080 to 3102 (AEDIILHGNVVAGSERLGFHVGG). Asparagine 3133 and asparagine 3162 each carry an N-linked (GlcNAc...) asparagine glycan. A PbH1 8 repeat occupies 3188–3212 (TVQITLRNSVIVATSSSFDCIHDRK). N-linked (GlcNAc...) asparagine glycosylation is found at asparagine 3218, asparagine 3719, and asparagine 3831. Residues 3852 to 3872 (IILALSLCSVASWVALSCLVC) traverse the membrane as a helical segment. The segment at 3869 to 3886 (CLVCCWFKKSKTRKIKPE) is ciliary targeting sequence (CST). Residues 3873-4059 (CWFKKSKTRK…LHTAPPETIQ (187 aa)) lie on the Cytoplasmic side of the membrane. Residues 3885 to 3898 (PEDISESQAKEQKK) are compositionally biased toward basic and acidic residues. Residues 3885–3915 (PEDISESQAKEQKKNTHNSSKPRGLQAKTAK) are disordered. Residues 3946 to 3970 (KRKVSRLAVTEERTTTPAPKIPRIT) are nuclear localization signal (NLS). The disordered stretch occupies residues 4015–4038 (QERKQGQEPSQLDKGSDCTGLSQE).

As to quaternary structure, interacts with CAMLG. Interacts with PKD2. Interacts (via CST) with ARF4; this interaction allows an efficient PKHD1 trafficking to the cilium. Interacts (via CST) with RAB8A; this interaction controls trafficking through the endomembrane systeme and to the cilium. Interacts (via CST) with TULP3; this interaction allows PKHD1 trafficking to the cilium. Post-translationally, palmitoylated. Palmitoylation facilitates the trafficking to the cilia and membrane targeting. N-glycosylated. In terms of processing, several proteolytic cleavages occur within the extracellular domain, whereas at least one cleavage occurs within the cytoplasmic domain. Cleaved by a probable proprotein convertase which produces an extracellular domain (polyductin extracellular domain, (PECD)) and a C-terminal fragment (polyductin transmembrane fragment (PTM)) which are tethered together by disulfide bonds. This extracellular domain (PECD) is then shed from the primary cilium by activation of a member of the ADAM metalloproteinase disintegrins family, resulting in concomitant release of an intra-cellular C-terminal fragment (ICD) via a gamma-secretase-dependent process. The proteolytic cleavage of the C-terminal intracellular fragment (ICD) is controlled by cytosolic calcium concentration and activation of PKC. As to expression, expressed in bile ducts and distal nephron segments but is absent from the proximal tubule. Expressed in pancreas and kidney but also in the liver. Expressed primarily in the distal tubule and thick ascending limb of the loop of Henle, and at low-level in the proximal tubule before renal development is complete at P0.

The protein resides in the cell membrane. It is found in the cytoplasm. The protein localises to the apical cell membrane. Its subcellular location is the cytoskeleton. It localises to the cilium basal body. The protein resides in the cell projection. It is found in the cilium. The protein localises to the spindle. Its subcellular location is the chromosome. It localises to the centromere. The protein resides in the nucleus. It is found in the secreted. The protein localises to the extracellular exosome. Its subcellular location is the endoplasmic reticulum. It localises to the golgi apparatus. Promotes ciliogenesis in renal epithelial cells and therefore participates in the tubules formation and/or ensures the maintenance of the architecture of the lumen of the kidney. Has an impact on cellular symmetry by ensuring correct bipolar cell division through the regulation of centrosome duplication and mitotic spindle assembly and by maintaining oriented cell division (OCD) during tubular elongation through planar cell polarity (PCP) pathway. During epithelial cell morphogenesis, it also regulates cell-cell and cell-matrix adhesion and participates in cell motility. Promotes cell-cell contact through the positive regulation of PTK2 kinase activity leading to either positive regulation of epithelial cell proliferation through the HRAS/RAF1 pathways, or negative regulation of apoptosis through the PDK1/AKT1 pathway. May act in collecting-duct and biliary differentiation. May participate in the regulation of the cholangiocytes proliferation and the CCN2 production in an CXCL8-dependent manner. In Mus musculus (Mouse), this protein is Fibrocystin.